Consider the following 295-residue polypeptide: GTPase Era (295 aa).

One can recognise an Era-type G domain in the interval 5 to 172 (YCGYAAIIGR…EQAVHQLMPE (168 aa)). The tract at residues 13 to 20 (GRPNVGKS) is G1. 13–20 (GRPNVGKS) provides a ligand contact to GTP. Residues 39–43 (QTTRY) form a G2 region. A G3 region spans residues 60–63 (DTPG). GTP-binding positions include 60–64 (DTPGL) and 121–124 (NKVD). The tract at residues 121–124 (NKVD) is G4. The interval 151-153 (LSA) is G5. Positions 203–279 (LGQEIPYSLA…FLQLWVKVKS (77 aa)) constitute a KH type-2 domain.

It belongs to the TRAFAC class TrmE-Era-EngA-EngB-Septin-like GTPase superfamily. Era GTPase family. In terms of assembly, monomer.

Its subcellular location is the cytoplasm. The protein resides in the cell inner membrane. Its function is as follows. An essential GTPase that binds both GDP and GTP, with rapid nucleotide exchange. Plays a role in 16S rRNA processing and 30S ribosomal subunit biogenesis and possibly also in cell cycle regulation and energy metabolism. This Coxiella burnetii (strain RSA 331 / Henzerling II) protein is GTPase Era.